The primary structure comprises 464 residues: Fumarate hydratase class II (464 aa).

Substrate contacts are provided by residues 98 to 100 (SGT), Arg126, 129 to 132 (HPND), 139 to 141 (SSN), and Thr187. The active-site Proton donor/acceptor is His188. Ser318 is a catalytic residue. Residues Ser319 and 324 to 326 (KVN) each bind substrate.

Belongs to the class-II fumarase/aspartase family. Fumarase subfamily. As to quaternary structure, homotetramer.

Its subcellular location is the cytoplasm. The catalysed reaction is (S)-malate = fumarate + H2O. It functions in the pathway carbohydrate metabolism; tricarboxylic acid cycle; (S)-malate from fumarate: step 1/1. Functionally, involved in the TCA cycle. Catalyzes the stereospecific interconversion of fumarate to L-malate. The protein is Fumarate hydratase class II of Photorhabdus laumondii subsp. laumondii (strain DSM 15139 / CIP 105565 / TT01) (Photorhabdus luminescens subsp. laumondii).